The sequence spans 341 residues: GTP 3',8-cyclase (341 aa).

The region spanning 11–231 is the Radical SAM core domain; sequence QKSRPLRDLR…RIINEDMPIE (221 aa). Arg20 serves as a coordination point for GTP. The [4Fe-4S] cluster site is built by Cys27 and Cys31. Tyr33 lines the S-adenosyl-L-methionine pocket. Position 34 (Cys34) interacts with [4Fe-4S] cluster. Arg75 provides a ligand contact to GTP. Residue Gly79 coordinates S-adenosyl-L-methionine. Thr106 contacts GTP. Ser130 contributes to the S-adenosyl-L-methionine binding site. Lys167 serves as a coordination point for GTP. Met201 is an S-adenosyl-L-methionine binding site. Positions 265 and 268 each coordinate [4Fe-4S] cluster. 270 to 272 contributes to the GTP binding site; that stretch reads RAR. Cys282 contacts [4Fe-4S] cluster.

The protein belongs to the radical SAM superfamily. MoaA family. Monomer and homodimer. It depends on [4Fe-4S] cluster as a cofactor.

It carries out the reaction GTP + AH2 + S-adenosyl-L-methionine = (8S)-3',8-cyclo-7,8-dihydroguanosine 5'-triphosphate + 5'-deoxyadenosine + L-methionine + A + H(+). The protein operates within cofactor biosynthesis; molybdopterin biosynthesis. Functionally, catalyzes the cyclization of GTP to (8S)-3',8-cyclo-7,8-dihydroguanosine 5'-triphosphate. This is GTP 3',8-cyclase from Bacillus licheniformis (strain ATCC 14580 / DSM 13 / JCM 2505 / CCUG 7422 / NBRC 12200 / NCIMB 9375 / NCTC 10341 / NRRL NRS-1264 / Gibson 46).